The chain runs to 203 residues: Peptidyl-tRNA hydrolase (203 aa).

Tyrosine 18 lines the tRNA pocket. The active-site Proton acceptor is histidine 23. Phenylalanine 69, asparagine 71, and asparagine 117 together coordinate tRNA.

The protein belongs to the PTH family. As to quaternary structure, monomer.

It is found in the cytoplasm. The catalysed reaction is an N-acyl-L-alpha-aminoacyl-tRNA + H2O = an N-acyl-L-amino acid + a tRNA + H(+). In terms of biological role, hydrolyzes ribosome-free peptidyl-tRNAs (with 1 or more amino acids incorporated), which drop off the ribosome during protein synthesis, or as a result of ribosome stalling. Catalyzes the release of premature peptidyl moieties from peptidyl-tRNA molecules trapped in stalled 50S ribosomal subunits, and thus maintains levels of free tRNAs and 50S ribosomes. This is Peptidyl-tRNA hydrolase from Prochlorococcus marinus subsp. pastoris (strain CCMP1986 / NIES-2087 / MED4).